The following is a 447-amino-acid chain: GTPase Der (447 aa).

2 consecutive EngA-type G domains span residues 3–167 (PVVA…NLPD) and 181–354 (IKLA…KSAT). GTP contacts are provided by residues 9–16 (GRPNVGKS), 56–60 (DTGGF), 119–122 (NKAE), 187–194 (GRPNVGKS), 234–238 (DTAGL), and 299–302 (NKWD). One can recognise a KH-like domain in the interval 355–439 (RKMSTPVLTR…PLRIQFKSSQ (85 aa)).

It belongs to the TRAFAC class TrmE-Era-EngA-EngB-Septin-like GTPase superfamily. EngA (Der) GTPase family. Associates with the 50S ribosomal subunit.

Its function is as follows. GTPase that plays an essential role in the late steps of ribosome biogenesis. The polypeptide is GTPase Der (Variovorax paradoxus (strain S110)).